Here is a 468-residue protein sequence, read N- to C-terminus: 3-isopropylmalate dehydratase large subunit (468 aa).

Cysteine 347, cysteine 407, and cysteine 410 together coordinate [4Fe-4S] cluster.

Belongs to the aconitase/IPM isomerase family. LeuC type 1 subfamily. As to quaternary structure, heterodimer of LeuC and LeuD. [4Fe-4S] cluster is required as a cofactor.

It carries out the reaction (2R,3S)-3-isopropylmalate = (2S)-2-isopropylmalate. Its pathway is amino-acid biosynthesis; L-leucine biosynthesis; L-leucine from 3-methyl-2-oxobutanoate: step 2/4. Its function is as follows. Catalyzes the isomerization between 2-isopropylmalate and 3-isopropylmalate, via the formation of 2-isopropylmaleate. This is 3-isopropylmalate dehydratase large subunit from Synechococcus elongatus (strain ATCC 33912 / PCC 7942 / FACHB-805) (Anacystis nidulans R2).